The following is a 187-amino-acid chain: Corticoliberin (187 aa).

The signal sequence occupies residues 1-24; it reads MRLRLLVSAGMLLVALSPCLPCRA. Residues 25–144 constitute a propeptide that is removed on maturation; the sequence is LLSRGSVSGA…HQGALERERR (120 aa). Residues 75–95 are disordered; that stretch reads AARLSPNSTPLTAGRGSRPSH. Isoleucine 185 carries the post-translational modification Isoleucine amide.

This sequence belongs to the sauvagine/corticotropin-releasing factor/urotensin I family. Interacts (via C-terminus) with CRFR1 (via N-terminal extracellular domain). As to expression, produced by the hypothalamus.

It localises to the secreted. Hormone regulating the release of corticotropin from pituitary gland. Induces NLRP6 in intestinal epithelial cells, hence may influence gut microbiota profile. The polypeptide is Corticoliberin (Crh) (Rattus norvegicus (Rat)).